The chain runs to 208 residues: dTTP/UTP pyrophosphatase (208 aa).

D78 (proton acceptor) is an active-site residue.

Belongs to the Maf family. YhdE subfamily. A divalent metal cation is required as a cofactor.

It is found in the cytoplasm. It catalyses the reaction dTTP + H2O = dTMP + diphosphate + H(+). The catalysed reaction is UTP + H2O = UMP + diphosphate + H(+). In terms of biological role, nucleoside triphosphate pyrophosphatase that hydrolyzes dTTP and UTP. May have a dual role in cell division arrest and in preventing the incorporation of modified nucleotides into cellular nucleic acids. In Maricaulis maris (strain MCS10) (Caulobacter maris), this protein is dTTP/UTP pyrophosphatase.